Consider the following 334-residue polypeptide: Phosphate acyltransferase (334 aa).

The protein belongs to the PlsX family. Homodimer. Probably interacts with PlsY.

It localises to the cytoplasm. It carries out the reaction a fatty acyl-[ACP] + phosphate = an acyl phosphate + holo-[ACP]. It participates in lipid metabolism; phospholipid metabolism. Functionally, catalyzes the reversible formation of acyl-phosphate (acyl-PO(4)) from acyl-[acyl-carrier-protein] (acyl-ACP). This enzyme utilizes acyl-ACP as fatty acyl donor, but not acyl-CoA. The protein is Phosphate acyltransferase of Desulfitobacterium hafniense (strain DSM 10664 / DCB-2).